A 247-amino-acid polypeptide reads, in one-letter code: MNVLSCSINTLNGLYDLSGVEVGQHFYWKIGGFQVHGQVLITSWVVIAILLGSAALAVRNPQTIPTGGQNFFEYVLEFIRDVSKTQIGEEYGPWVPFIGTMFLFIFVSNWSGALLPWKIIQLPHGELAAPTNDINTTVALALLTSVAYFYAGLTKKGLSYFGKYIQPTPILLPINILEDFTKPLSLSFRLFGNILADELVVVVLVSLVPSVVPIPVMFLGLFTSGIQALIFATLAAAYIGESMEGHH.

5 helical membrane passes run 38–58 (QVLI…ALAV), 95–115 (VPFI…GALL), 134–154 (INTT…AGLT), 199–219 (LVVV…VMFL), and 220–240 (GLFT…AYIG).

It belongs to the ATPase A chain family. F-type ATPases have 2 components, CF(1) - the catalytic core - and CF(0) - the membrane proton channel. CF(1) has five subunits: alpha(3), beta(3), gamma(1), delta(1), epsilon(1). CF(0) has four main subunits: a, b, b' and c.

It localises to the plastid. The protein localises to the chloroplast thylakoid membrane. Functionally, key component of the proton channel; it plays a direct role in the translocation of protons across the membrane. This chain is ATP synthase subunit a, chloroplastic, found in Helianthus annuus (Common sunflower).